Reading from the N-terminus, the 233-residue chain is MPKHSKRYLEARKFVDRTKYYDLDEAIELVKKTATAKFDETIELHIQTGIDYRKPEQHIRGTVVLPHGTGKEVRVLVFAKGEAAKEALEAGADYVGAEDLVEKIEKEGFLDFDVAIATPDMMRVIGRLGKILGPRGLMPSPKSGTVTQEVAEAVKEFKKGRIEVRTDKTGNIHIPVGKRSFDNEKLKENIISAVRQIMQMKPAGVKGQFIKKAVLSSTMGPGIKLNLQSLLKE.

It belongs to the universal ribosomal protein uL1 family. As to quaternary structure, part of the 50S ribosomal subunit.

Binds directly to 23S rRNA. The L1 stalk is quite mobile in the ribosome, and is involved in E site tRNA release. In terms of biological role, protein L1 is also a translational repressor protein, it controls the translation of the L11 operon by binding to its mRNA. The sequence is that of Large ribosomal subunit protein uL1 from Thermotoga petrophila (strain ATCC BAA-488 / DSM 13995 / JCM 10881 / RKU-1).